We begin with the raw amino-acid sequence, 1257 residues long: Liprin-alpha-2 (1257 aa).

Residues 1–29 are disordered; the sequence is MMCEVMPTINEDTPMSQRGSQSSGSDSDS. The span at 16-26 shows a compositional bias: low complexity; sequence SQRGSQSSGSD. Coiled-coil stretches lie at residues 29–154 and 185–235; these read SHFE…SLRM and KALD…SSEG. Serine 236 carries the phosphoserine modification. Phosphothreonine is present on threonine 237. Serine 239 is subject to Phosphoserine. 2 coiled-coil regions span residues 264–541 and 643–695; these read TDDT…SLIE and HSDA…GLNL. The segment at 439–463 is disordered; it reads GQLEEKNQELQRARQREKMNEEHNK. 2 positions are modified to phosphoserine: serine 687 and serine 689. The segment covering 709–725 has biased composition (low complexity); that stretch reads TASSLASSSPPSGHSTP. Disordered regions lie at residues 709 to 738 and 759 to 834; these read TASS…EMDR and EEDG…KSSI. A compositionally biased stretch (polar residues) spans 787–802; that stretch reads TLPSSYHNDARSSLSA. Phosphoserine occurs at positions 817 and 820. 3 consecutive SAM domains span residues 898-964, 1020-1084, and 1108-1177; these read WDGP…MVSL, NHEW…LKRL, and WSND…LLAL. Residues 1081–1107 are a coiled coil; it reads LKRLNYDRKELERRREASQHEIKDVLV.

This sequence belongs to the liprin family. Liprin-alpha subfamily. In terms of assembly, forms homodimers and heterodimers with liprins-alpha and liprins-beta. Interacts with the second PTPase domain of PTPRD, PTPRF and PTPRS. Interacts with KIF1A; the interaction decreases in presence of calcium.

It localises to the cytoplasm. The protein localises to the cell surface. It is found in the cell projection. Its subcellular location is the dendritic spine. In terms of biological role, alters PTPRF cellular localization and induces PTPRF clustering. May regulate the disassembly of focal adhesions. May localize receptor-like tyrosine phosphatases type 2A at specific sites on the plasma membrane, possibly regulating their interaction with the extracellular environment and their association with substrates. In neuronal cells, is a scaffolding protein in the dendritic spines which acts as immobile postsynaptic post able to recruit KIF1A-driven dense core vesicles to dendritic spines. The sequence is that of Liprin-alpha-2 (Ppfia2) from Mus musculus (Mouse).